Reading from the N-terminus, the 104-residue chain is Thiosulfate sulfurtransferase PspE (104 aa).

The signal sequence occupies residues 1–19 (MFKKGLLALALVFSLPVFA). The region spanning 20 to 104 (AEHWIDVRVP…KDIAMPKVKG (85 aa)) is the Rhodanese domain. C67 functions as the Cysteine persulfide intermediate in the catalytic mechanism.

In terms of assembly, monomer.

The protein localises to the periplasm. It catalyses the reaction thiosulfate + hydrogen cyanide = thiocyanate + sulfite + 2 H(+). Inhibited by thiosulfate above 100 mM, particularly at low cyanide concentrations (&lt;5 mM). Inhibited by sodium sulfate or sodium chloride at 0.25 M which gives around 50% inhibition of rhodanese activity. Addition of sodium phosphate at the same concentration results in about 65% inhibition. Sulfite strongly inhibits PspE activity (1 mM sodium sulfite resulted in more than 50% inhibition of rhodanese activity). Functionally, the phage shock protein (psp) operon (pspABCDE) may play a significant role in the competition for survival under nutrient- or energy-limited conditions. PspE catalyzes the sulfur-transfer reaction from thiosulfate to cyanide, to form sulfite and thiocyanate. Also able to use dithiol (dithiothreitol) as an alternate sulfur acceptor. Also possesses a very low mercaptopyruvate sulfurtransferase activity. The protein is Thiosulfate sulfurtransferase PspE (pspE) of Escherichia coli (strain K12).